Here is a 139-residue protein sequence, read N- to C-terminus: Putative pre-16S rRNA nuclease (139 aa).

The protein belongs to the YqgF nuclease family.

The protein resides in the cytoplasm. Could be a nuclease involved in processing of the 5'-end of pre-16S rRNA. This Streptococcus thermophilus (strain ATCC BAA-491 / LMD-9) protein is Putative pre-16S rRNA nuclease.